A 361-amino-acid polypeptide reads, in one-letter code: Glutaminyl-peptide cyclotransferase (361 aa).

Positions 1 to 28 (MAGCRDPRVVDTLHLLLLVAVLPLAVSG) are cleaved as a signal peptide. N-linked (GlcNAc...) asparagine glycosylation is present at Asn49. A disulfide bridge links Cys139 with Cys164. Asp159 serves as a coordination point for Zn(2+). Asn183 is a glycosylation site (N-linked (GlcNAc...) asparagine). Glu201 functions as the Proton acceptor in the catalytic mechanism. Residue Glu202 coordinates Zn(2+). Asp248 functions as the Proton acceptor in the catalytic mechanism. His330 is a Zn(2+) binding site.

The protein belongs to the glutaminyl-peptide cyclotransferase family. As to expression, expressed mainly in brain tissue.

It localises to the secreted. It catalyses the reaction N-terminal L-glutaminyl-[peptide] = N-terminal 5-oxo-L-prolyl-[peptide] + NH4(+). In terms of biological role, responsible for the biosynthesis of pyroglutamyl peptides. Has a bias against acidic and tryptophan residues adjacent to the N-terminal glutaminyl residue and a lack of importance of chain length after the second residue. Also catalyzes N-terminal pyroglutamate formation. The sequence is that of Glutaminyl-peptide cyclotransferase (QPCT) from Bos taurus (Bovine).